Reading from the N-terminus, the 149-residue chain is Heavy metal-associated isoprenylated plant protein 21 (149 aa).

The region spanning 25–88 (LQTVDIKVKM…RVKSTGKKAE (64 aa)) is the HMA domain. Cys36 and Cys39 together coordinate a metal cation. At Cys146 the chain carries Cysteine methyl ester. Cys146 carries S-farnesyl cysteine lipidation. The propeptide at 147–149 (SIM) is removed in mature form.

It belongs to the HIPP family. As to quaternary structure, interacts with ZHD11/HB29. In terms of tissue distribution, expressed at low levels in leaves and sepals.

Its subcellular location is the membrane. Functionally, heavy-metal-binding protein. Binds cadmium. May be involved in cadmium transport and play a role in cadmium detoxification. In Arabidopsis thaliana (Mouse-ear cress), this protein is Heavy metal-associated isoprenylated plant protein 21.